The following is a 479-amino-acid chain: Transcription factor CP2-like protein 1 (479 aa).

One can recognise a Grh/CP2 DB domain in the interval arginine 43 to asparagine 280. 2 disordered regions span residues lysine 219 to tyrosine 245 and proline 271 to glycine 301. A compositionally biased stretch (basic and acidic residues) spans lysine 221–tyrosine 245. Residues proline 261 to arginine 365 are SAM2-like domain. Positions proline 271 to serine 281 are enriched in polar residues.

It belongs to the grh/CP2 family. CP2 subfamily. As to quaternary structure, forms homohexamers via its SAM-like domain. Interacts with MTA1; which is indispensable for TFCP2l1-mediated self-renewal-promoting effect and endoderm-inhibiting action. In terms of tissue distribution, highly expressed in placental JEG-3 cells and very low levels of expression in non-steroidogenic cells. No expression was seen in adrenal NCI-H295A cells or in adrenal tissue.

It localises to the nucleus. Functionally, transcription factor that facilitates establishment and maintenance of pluripotency in embryonic stem cells (ESCs). With KLF2, acts as the major effector of self-renewal that mediates induction of pluripotency downstream of LIF/STAT3 and Wnt/beta-catenin signaling. Required for normal duct development in the salivary gland and kidney. Coordinates the development of the kidney collecting ducts intercalated (IC) and principal (PC) cells, which regulate acid-base and salt-water homeostasis, respectively. Regulates the expression of IC genes including subunits B1 and D2 of the V-ATPase complex, OXGR1, CA12, SLC4A1, AQP6 and IC-specific transcription factor FOXI1. Also regulates the expression of JAG1 and subsequent notch signaling in the collecting duct. JAG1 initiates notch signaling in PCs but inhibits notch signaling in ICs. Acts as a transcriptional suppressor that may suppress UBP1-mediated transcriptional activation. Modulates the placental expression of CYP11A1. This chain is Transcription factor CP2-like protein 1 (TFCP2L1), found in Homo sapiens (Human).